A 214-amino-acid chain; its full sequence is Cytochrome c biogenesis ATP-binding export protein CcmA (214 aa).

The 197-residue stretch at Leu-16–Ala-212 folds into the ABC transporter domain. Gly-48–Thr-55 is an ATP binding site.

Belongs to the ABC transporter superfamily. CcmA exporter (TC 3.A.1.107) family. As to quaternary structure, the complex is composed of two ATP-binding proteins (CcmA) and two transmembrane proteins (CcmB).

Its subcellular location is the cell inner membrane. The catalysed reaction is heme b(in) + ATP + H2O = heme b(out) + ADP + phosphate + H(+). Its function is as follows. Part of the ABC transporter complex CcmAB involved in the biogenesis of c-type cytochromes; once thought to export heme, this seems not to be the case, but its exact role is uncertain. Responsible for energy coupling to the transport system. In Maricaulis maris (strain MCS10) (Caulobacter maris), this protein is Cytochrome c biogenesis ATP-binding export protein CcmA.